We begin with the raw amino-acid sequence, 337 residues long: Calcium-binding protein 39-like (337 aa).

Belongs to the Mo25 family. In terms of assembly, component of a trimeric complex composed of STK11/LKB1, STRAD (STRADA or STRADB) and CAB39/MO25 (CAB39/MO25alpha or CAB39L/MO25beta): the complex tethers STK11/LKB1 in the cytoplasm and stimulates its catalytic activity.

Its function is as follows. Component of a complex that binds and activates STK11/LKB1. In the complex, required to stabilize the interaction between CAB39/MO25 (CAB39/MO25alpha or CAB39L/MO25beta) and STK11/LKB1. This Mus musculus (Mouse) protein is Calcium-binding protein 39-like (Cab39l).